Here is a 2151-residue protein sequence, read N- to C-terminus: Calpain-type cysteine protease DEK1 (2151 aa).

The first 32 residues, Met-1 to Ala-32, serve as a signal peptide directing secretion. The Extracellular segment spans residues Val-33 to Ala-69. The chain crosses the membrane as a helical span at residues Trp-70–Ile-90. Residues Leu-91 to His-94 lie on the Cytoplasmic side of the membrane. Residues Ile-95–Met-115 traverse the membrane as a helical segment. Residues Leu-116 to Arg-126 lie on the Extracellular side of the membrane. Residues Ala-127 to Val-147 form a helical membrane-spanning segment. Topologically, residues Tyr-148–Gly-163 are cytoplasmic. The chain crosses the membrane as a helical span at residues Phe-164–Val-184. Residues Phe-185–His-235 lie on the Extracellular side of the membrane. The chain crosses the membrane as a helical span at residues Leu-236 to Leu-256. Residues Thr-257–Trp-263 are Cytoplasmic-facing. The chain crosses the membrane as a helical span at residues Leu-264 to Tyr-284. At Gly-285 to Val-293 the chain is on the extracellular side. A helical transmembrane segment spans residues Leu-294 to Trp-314. Over Tyr-315–Cys-319 the chain is Cytoplasmic. The chain crosses the membrane as a helical span at residues Ile-320–Ile-340. Residues Thr-341–Pro-615 lie on the Extracellular side of the membrane. Disordered stretches follow at residues Arg-363 to Gly-393 and Cys-405 to Ser-442. Low complexity predominate over residues Ser-369–Asp-388. Polar residues predominate over residues Cys-405–Ile-420. Residues Arg-430–Ser-442 show a composition bias toward low complexity. The helical transmembrane segment at Glu-616–Phe-636 threads the bilayer. At Arg-637–Glu-652 the chain is on the cytoplasmic side. Residues Phe-653–Ser-673 form a helical membrane-spanning segment. Topologically, residues Leu-674–Arg-686 are extracellular. A helical membrane pass occupies residues Lys-687 to Ser-707. The Cytoplasmic portion of the chain corresponds to Lys-708–Val-711. The helical transmembrane segment at Leu-712–Ile-732 threads the bilayer. The Extracellular segment spans residues Trp-733 to Lys-760. A helical membrane pass occupies residues Gly-761–Ile-782. The Cytoplasmic portion of the chain corresponds to Ser-783–Gly-813. A helical transmembrane segment spans residues Trp-814–Phe-834. Over Ala-835–Ala-844 the chain is Extracellular. The chain crosses the membrane as a helical span at residues Val-845–Val-865. Residues Val-866–Asp-878 lie on the Cytoplasmic side of the membrane. The helical transmembrane segment at Phe-879–Met-899 threads the bilayer. The Extracellular portion of the chain corresponds to Val-900–Gly-912. Residues Val-913 to Ala-933 form a helical membrane-spanning segment. Topologically, residues Val-934 to Pro-936 are cytoplasmic. Residues Trp-937–Ile-957 traverse the membrane as a helical segment. Residues His-958 to Gln-971 are Extracellular-facing. Residues Thr-972–His-992 form a helical membrane-spanning segment. The Cytoplasmic portion of the chain corresponds to Gln-993–Thr-1006. A helical membrane pass occupies residues Phe-1007 to Tyr-1027. The Extracellular segment spans residues Ser-1028–Ala-1050. The helical transmembrane segment at Phe-1051–Ile-1071 threads the bilayer. Topologically, residues Ile-1072–Leu-2151 are cytoplasmic. Calpain catalytic domains follow at residues Ser-1407–Asp-1600 and Gln-1695–Tyr-1997. Catalysis depends on residues Cys-1761, His-1919, and Asn-1939.

It belongs to the peptidase C2 family. Autocatalytic proteolytic cleavage leading to the production of mainly cytoplasmic localized subproducts of about 85 and 120 kDa. In terms of tissue distribution, mostly expressed in meristems and organ primordia. Expressed at low levels in young and germinating seeds at 10 ppm and in seedling roots at 67 ppm. Present in most tissues at a low level.

It is found in the cell membrane. It localises to the endosome membrane. The protein localises to the endoplasmic reticulum membrane. Its subcellular location is the cytoplasm. Essential protease involved in epiderm development. Required for aleurone cell development in the endosperm probably by maintaining and restricting the aleurone and embryonic epidermal L1 cell-layer fates as well as meristems organization. Involved in the maintenance of adaxial/abaxial axis information in developing leaves, probably by regulating cell proliferation and expansion. Does not need calcium ions to be active. Required for the formation of giant cells in sepals by determining cell fate and promoting endoreplication. The sequence is that of Calpain-type cysteine protease DEK1 from Arabidopsis thaliana (Mouse-ear cress).